Consider the following 41-residue polypeptide: Photosystem I reaction center subunit IX (41 aa).

Residues 7–27 (YLSTAPVLATVWMIITAGILI) form a helical membrane-spanning segment.

The protein belongs to the PsaJ family.

Its subcellular location is the cellular thylakoid membrane. Functionally, may help in the organization of the PsaE and PsaF subunits. The chain is Photosystem I reaction center subunit IX from Trichodesmium erythraeum (strain IMS101).